The sequence spans 362 residues: GDSL esterase/lipase At5g22810 (362 aa).

An N-terminal signal peptide occupies residues 1–28 (MGFSGIWLNLYVVFGSLMVFERMVVMVV). Residue Ser44 is the Nucleophile of the active site. Asn159, Asn162, Asn264, and Asn329 each carry an N-linked (GlcNAc...) asparagine glycan. Active-site residues include Asp337 and His340.

It belongs to the 'GDSL' lipolytic enzyme family.

The protein localises to the secreted. This Arabidopsis thaliana (Mouse-ear cress) protein is GDSL esterase/lipase At5g22810.